The sequence spans 213 residues: MDPLQKRNPASPSKSSPMTAAETSQEGPAPSQPSYSEQPMMGLSNLSPGPGPSQAVPLPEGLLRQRYREEKTLEERRWERLEFLQRKKAFLRHVRRRHRDHMAPYAVGREARISPLGDRSQNRFRCECRYCQSHRPNLSGIPGESNRAPHPSSWETLVQGLSGLTLSLGTNQPGPLPEAALQPQETEEKRQRERQQESKIMFQRLLKQWLEEN.

N-acetylmethionine is present on M1. The disordered stretch occupies residues 1-62 (MDPLQKRNPA…SQAVPLPEGL (62 aa)). Over residues 8–37 (NPASPSKSSPMTAAETSQEGPAPSQPSYSE) the composition is skewed to polar residues. At S114 the chain carries Phosphoserine. The chain crosses the membrane as a helical span at residues 154 to 170 (WETLVQGLSGLTLSLGT). A disordered region spans residues 165-198 (TLSLGTNQPGPLPEAALQPQETEEKRQRERQQES). Positions 186–197 (TEEKRQRERQQE) are enriched in basic and acidic residues.

Its subcellular location is the membrane. The polypeptide is Protein FAM156A/FAM156B (FAM156A) (Homo sapiens (Human)).